Here is a 176-residue protein sequence, read N- to C-terminus: MHATTIITVRKGGKVVMAGDGQVSLGQTVMKGNARKVRRLSKGDVIAGFAGATADAFTLLERLEAKLEQYPDQLMRAAVELAKDWRTNKYLRNLEAMMLVADRTVTLAITGNGDVLEPEHGTIAIGSGGNYAFAAARALMDSDKSAEEIARRALEIAGDICVYTNHNVVVETLDAE.

Residue threonine 4 is part of the active site. Residues glycine 158, cysteine 161, and threonine 164 each coordinate Na(+).

It belongs to the peptidase T1B family. HslV subfamily. As to quaternary structure, a double ring-shaped homohexamer of HslV is capped on each side by a ring-shaped HslU homohexamer. The assembly of the HslU/HslV complex is dependent on binding of ATP.

The protein resides in the cytoplasm. The enzyme catalyses ATP-dependent cleavage of peptide bonds with broad specificity.. Allosterically activated by HslU binding. Its function is as follows. Protease subunit of a proteasome-like degradation complex believed to be a general protein degrading machinery. This chain is ATP-dependent protease subunit HslV, found in Rhizobium meliloti (strain 1021) (Ensifer meliloti).